The sequence spans 739 residues: Disintegrin and metalloproteinase domain-containing protein 18 (739 aa).

The signal sequence occupies residues 1–16 (MFLLLALLTELGRLQA). Residues 17 to 184 (HEGSEGIFLH…IKNLSKLLPQ (168 aa)) constitute a propeptide that is removed on maturation. Residues Asn-36, Asn-76, Asn-122, Asn-149, Asn-156, Asn-177, and Asn-294 are each glycosylated (N-linked (GlcNAc...) asparagine). The Extracellular portion of the chain corresponds to 177-687 (NLSKLLPQYL…EKGYNTHWNN (511 aa)). Residues 184–381 (QYLEIYIIVE…FETKCLQKLS (198 aa)) form the Peptidase M12B domain. 4 disulfides stabilise this stretch: Cys-293–Cys-376, Cys-335–Cys-360, Cys-337–Cys-342, and Cys-450–Cys-471. Residues Asn-359, Asn-465, Asn-561, Asn-611, and Asn-625 are each glycosylated (N-linked (GlcNAc...) asparagine). Positions 390–479 (QPVCGNGILE…NCVPDTYALN (90 aa)) constitute a Disintegrin domain. Residues 620–654 (MGYNCNATTKCKGKGICNNFGNCQCFPGHRPPDCK) enclose the EGF-like domain. Cystine bridges form between Cys-624-Cys-636, Cys-630-Cys-642, and Cys-644-Cys-653. Residues 688 to 708 (WFILSFCIFLPFFIVFTTVIF) traverse the membrane as a helical segment. Residues 709 to 739 (KRNEISKSCNRENAEYNRNSSVVSESDDVGH) lie on the Cytoplasmic side of the membrane.

In terms of processing, the prodomain and the metalloprotease-like domain are cleaved during the epididymal maturation of the spermatozoa. Expressed specifically in testis.

Its subcellular location is the membrane. In terms of biological role, sperm surface membrane protein that may be involved in spermatogenesis and fertilization. This is a non catalytic metalloprotease-like protein. The protein is Disintegrin and metalloproteinase domain-containing protein 18 (ADAM18) of Homo sapiens (Human).